Reading from the N-terminus, the 794-residue chain is Protein smoothened (794 aa).

The N-terminal stretch at 1 to 15 (GPCWLWALALGLALG) is a signal peptide. Topologically, residues 16–201 (PRRCPAAPLN…FTETEHREMH (186 aa)) are extracellular. An N-linked (GlcNAc...) asparagine glycan is attached at Asn-25. Intrachain disulfides connect Cys-34-Cys-148, Cys-40-Cys-104, Cys-48-Cys-97, Cys-88-Cys-124, and Cys-117-Cys-139. The FZ domain maps to 35–151 (RRPAACERLR…DRFPEGCPNE (117 aa)). A cholesterol-binding site is contributed by Asp-65. The N-linked (GlcNAc...) asparagine glycan is linked to Asn-158. 2 cysteine pairs are disulfide-bonded: Cys-163–Cys-183 and Cys-187–Cys-264. A helical membrane pass occupies residues 202-222 (VYIAFSSVTISCTFFTLATFV). Over 223-231 (ADWRNSNRY) the chain is Cytoplasmic. The chain crosses the membrane as a helical span at residues 232–252 (PAVILFYVNACFFVGSIGCVA). The Extracellular portion of the chain corresponds to 253-283 (QFMDGARDEIVCRADGTMRLGEPTSNETLSC). Asn-278 carries N-linked (GlcNAc...) asparagine glycosylation. A disulfide bridge connects residues Cys-283 and Cys-359. Residues 284 to 304 (VIIFVIVYYSLMSGVIWFVML) traverse the membrane as a helical segment. The Cytoplasmic portion of the chain corresponds to 305–327 (TYAWHTSFKALGTTYQPLLGKTS). Residues 328–348 (YFHLITWSIPFVLTVAILAVA) form a helical membrane-spanning segment. Over 349–371 (QVDGDSVSGICFVGYKNYRYRAG) the chain is Extracellular. Tyr-363 is a binding site for cholesterol. Residues 372-392 (FVLAPIGLVLIVGGYFLIRGV) traverse the membrane as a helical segment. The Cytoplasmic portion of the chain corresponds to 393-420 (MTLFSIKSNHPGLLSEKAASKINETMLR). Residues 421–440 (LGIFGFLAFGFVFITFGCHF) traverse the membrane as a helical segment. Residues 441 to 493 (YDFFNQAEWERSFREYVLCEANVTIATQTNKPIPECEIKNRPSLLVEKINLFA) are Extracellular-facing. A disulfide bridge connects residues Cys-459 and Cys-476. Asn-462 carries an N-linked (GlcNAc...) asparagine glycan. The helical transmembrane segment at 494-514 (MFGTGISMSTWVWTKATLLIW) threads the bilayer. Over 515–794 (KRTWCRLTGQ…AELLDADLDF (280 aa)) the chain is Cytoplasmic. Disordered stretches follow at residues 634 to 655 (LQKRSRKKKRRKKKKEEVCPER) and 723 to 773 (PFCP…RAGL). Residues 637–647 (RSRKKKRRKKK) are compositionally biased toward basic residues.

It belongs to the G-protein coupled receptor Fz/Smo family. In terms of assembly, homodimer.

Its subcellular location is the cell membrane. The protein resides in the cell projection. The protein localises to the cilium. Its function is as follows. G protein-coupled receptor which associates with the patched protein (PTCH) to transduce hedgehog protein signaling. Binding of sonic hedgehog (SHH) to its receptor patched prevents inhibition of smoothened (SMO) by patched. When active, SMO binds to and sequesters protein kinase A catalytic subunit PRKACA at the cell membrane, preventing PRKACA-mediated phosphorylation of GLI transcription factors which releases the GLI proteins from PRKACA-mediated inhibition and allows for transcriptional activation of hedgehog pathway target genes. The sequence is that of Protein smoothened (SMO) from Gallus gallus (Chicken).